A 72-amino-acid chain; its full sequence is MSKDDVIQMQGEILENLPNATFRVKLENGHVVLGHISGKMRMHYIRILPGDKVTVELTPYDLSRARIVFRAK.

Residues 1-72 (MSKDDVIQMQ…SRARIVFRAK (72 aa)) enclose the S1-like domain.

This sequence belongs to the IF-1 family. In terms of assembly, component of the 30S ribosomal translation pre-initiation complex which assembles on the 30S ribosome in the order IF-2 and IF-3, IF-1 and N-formylmethionyl-tRNA(fMet); mRNA recruitment can occur at any time during PIC assembly.

Its subcellular location is the cytoplasm. Its function is as follows. One of the essential components for the initiation of protein synthesis. Stabilizes the binding of IF-2 and IF-3 on the 30S subunit to which N-formylmethionyl-tRNA(fMet) subsequently binds. Helps modulate mRNA selection, yielding the 30S pre-initiation complex (PIC). Upon addition of the 50S ribosomal subunit IF-1, IF-2 and IF-3 are released leaving the mature 70S translation initiation complex. The sequence is that of Translation initiation factor IF-1 from Methylibium petroleiphilum (strain ATCC BAA-1232 / LMG 22953 / PM1).